A 164-amino-acid polypeptide reads, in one-letter code: Large ribosomal subunit protein uL11 (164 aa).

Belongs to the universal ribosomal protein uL11 family. As to quaternary structure, part of the ribosomal stalk of the 50S ribosomal subunit. Interacts with L10 and the large rRNA to form the base of the stalk. L10 forms an elongated spine to which L12 dimers bind in a sequential fashion forming a multimeric L10(L12)X complex.

Its function is as follows. Forms part of the ribosomal stalk which helps the ribosome interact with GTP-bound translation factors. This chain is Large ribosomal subunit protein uL11, found in Pyrococcus horikoshii (strain ATCC 700860 / DSM 12428 / JCM 9974 / NBRC 100139 / OT-3).